A 646-amino-acid polypeptide reads, in one-letter code: Preterminal protein (646 aa).

Residues R357–R366 carry the Nuclear localization signal motif. S555 is subject to O-(5'-phospho-DNA)-serine. Residues L619–M646 form a disordered region. A compositionally biased stretch (pro residues) spans P624–A640.

Belongs to the adenoviridae terminal protein family. In terms of assembly, heterodimer with the polymerase; this heterodimer binds to bp 9 to 18 of the genome. Interacts with host POU2F1; POU2F1 binds to the auxiliary sequences in the inverted terminal repeats and tethers the pTP-POL heterodimer to the origin DNA thereby participating in the assembly of the pre-initiation complex (POL-TP-DBP-NFIA-POU2F1). In terms of processing, preterminal protein is used to replicate viral genome, upon genomic encapsidation it is processed first into iTP and finally into TP by adenovirus protease.

It is found in the host nucleus matrix. Its function is as follows. Protein covalently bound to the viral DNA that acts as a primer for viral genomic replication by DNA strand displacement. Assembles on the viral origin of replication in an initiation complex with viral polymerase, DBP, host NFIA and host POU2F1/OCT1. During initiation, the polymerase covalently couples the first dCTP with Ser-580 of pTP. The terminal protein stimulates the template activity over 20 fold compared to protein-free templates. Neo-synthesized viral genomes are linked to two preterminal proteins, one for each 5' end. These new genomes are encapsidated in the nucleus, and during capsid maturation by viral protease, preterminal protein is first cleaved into intermediary (iTP), then into mature TP. May play a role in host nuclear matrix localization of genomic DNA. This is Preterminal protein from Homo sapiens (Human).